We begin with the raw amino-acid sequence, 43 residues long: Protein PsbN (43 aa).

A helical transmembrane segment spans residues 7–27 (VAIFISCLLVSFTGYALYTAF).

Belongs to the PsbN family.

The protein resides in the plastid. It is found in the chloroplast thylakoid membrane. Its function is as follows. May play a role in photosystem I and II biogenesis. In Huperzia lucidula (Shining clubmoss), this protein is Protein PsbN.